Reading from the N-terminus, the 601-residue chain is MAEKNSHIRNFSIIAHIDHGKSTLADRLLEHTGTVTKREAQAQFLDNMELERERGITIKAQTVRMKYRAKDGRDYELNLIDTPGHVDFAYEVSRSMAACEGAILVVDATQGVEAQTLANVYQALDHDLEIVPVINKIDLPSADVEGVRQEIEEVIGLDAKDAVPASAKEGIGIGEILEQIVHRVPAPEGDPDAPLKAIVFDSWYDSYRGVVMLVRVFEGTVRPKQKIRLWSNRKEFEVQELGVFAPFAKAVGELQAGEVGVVVANVKDVHDAKVGDTITDAARPTEEPFPGFKVVKPMVFSGVFPIEAADYEQLRDALEKLSLNDSAFTYEPETSQALGFGFRCGYLGLLHMEIVQERLEREYQLALITTAPSVVYRVTDTSGAVEEIDNPAKLPPVQKIAKLEEPHLTCHIHARTEDVGAILKLCQERRGLQRDLKYLGTKRVQITYDIPLAEVVFDFFDKLKSVSRGYASLDYELKGYEEADLVKLDILINGEPVDALSVIVHRERAYQRGRDLCQRLREVIPKQMYEVAIQAAIGAKVIARETVKAFRKNVLAKCYGGDISRKRKLLEKQKEGKKRMKQVGSVEIPQEAFLAVLKVEE.

The region spanning 6 to 188 (SHIRNFSIIA…QIVHRVPAPE (183 aa)) is the tr-type G domain. Residues 18-23 (DHGKST) and 135-138 (NKID) each bind GTP.

This sequence belongs to the TRAFAC class translation factor GTPase superfamily. Classic translation factor GTPase family. LepA subfamily.

It is found in the cell inner membrane. The enzyme catalyses GTP + H2O = GDP + phosphate + H(+). Required for accurate and efficient protein synthesis under certain stress conditions. May act as a fidelity factor of the translation reaction, by catalyzing a one-codon backward translocation of tRNAs on improperly translocated ribosomes. Back-translocation proceeds from a post-translocation (POST) complex to a pre-translocation (PRE) complex, thus giving elongation factor G a second chance to translocate the tRNAs correctly. Binds to ribosomes in a GTP-dependent manner. The chain is Elongation factor 4 from Anaeromyxobacter sp. (strain K).